Reading from the N-terminus, the 189-residue chain is Lutzicidin (189 aa).

The signal sequence occupies residues methionine 1 to alanine 22. The propeptide occupies histidine 23–valine 155. Cystine bridges form between cysteine 79/cysteine 90 and cysteine 101/cysteine 118. The segment covering glutamate 125–glutamate 148 has biased composition (acidic residues). The disordered stretch occupies residues glutamate 125–proline 152.

Belongs to the cathelicidin family. In terms of tissue distribution, expressed by the venom gland.

The protein resides in the secreted. It is found in the target cell membrane. In terms of biological role, potent antimicrobial peptide against Gram-negative and Gram-positive bacteria. Adopts an amphipathic alpha helical conformation, that may allow to partition into the target membrane. Low hemolytic activities have been observed on mammalian cells. The protein is Lutzicidin of Bothrops lutzi (Sertao lancehead).